The sequence spans 312 residues: Glyoxylate/hydroxypyruvate reductase A (312 aa).

The active site involves R227. H275 serves as the catalytic Proton donor.

The protein belongs to the D-isomer specific 2-hydroxyacid dehydrogenase family. GhrA subfamily.

The protein resides in the cytoplasm. It carries out the reaction glycolate + NADP(+) = glyoxylate + NADPH + H(+). The catalysed reaction is (R)-glycerate + NAD(+) = 3-hydroxypyruvate + NADH + H(+). It catalyses the reaction (R)-glycerate + NADP(+) = 3-hydroxypyruvate + NADPH + H(+). Functionally, catalyzes the NADPH-dependent reduction of glyoxylate and hydroxypyruvate into glycolate and glycerate, respectively. The sequence is that of Glyoxylate/hydroxypyruvate reductase A from Escherichia coli (strain SMS-3-5 / SECEC).